The following is a 1237-amino-acid chain: Rho guanine nucleotide exchange factor 10-like protein (1237 aa).

2 disordered regions span residues M1–R117 and Y132–M203. Over residues E25–T45 the composition is skewed to acidic residues. Phosphoserine is present on S39. 2 positions are modified to phosphotyrosine: Y132 and Y153. 2 stretches are compositionally biased toward basic and acidic residues: residues E146–Q163 and E184–K194. A Phosphoserine modification is found at S241. The 188-residue stretch at V276–Q463 folds into the DH domain. Disordered regions lie at residues Q1091–H1118 and P1142–E1164.

In terms of assembly, interacts with RHOA, RHOB and RHOC.

It localises to the cytoplasm. Acts as a guanine nucleotide exchange factor (GEF) for RHOA, RHOB and RHOC. This chain is Rho guanine nucleotide exchange factor 10-like protein (ARHGEF10L), found in Bos taurus (Bovine).